Consider the following 554-residue polypeptide: Carboxypeptidase Y homolog A (554 aa).

The first 17 residues, 1 to 17 (MRISASTVLLGAASAAS), serve as a signal peptide directing secretion. Residues 18–137 (AASFQNQAQH…QLDNFNLRVK (120 aa)) constitute a propeptide that is removed on maturation. Intrachain disulfides connect cysteine 191–cysteine 431, cysteine 325–cysteine 339, cysteine 349–cysteine 372, cysteine 356–cysteine 365, and cysteine 394–cysteine 401. Residue asparagine 222 is glycosylated (N-linked (GlcNAc...) asparagine). Serine 278 is a catalytic residue. Aspartate 470 is a catalytic residue. An N-linked (GlcNAc...) asparagine glycan is attached at asparagine 518. Residue histidine 529 is part of the active site.

Belongs to the peptidase S10 family.

It localises to the vacuole. The catalysed reaction is Release of a C-terminal amino acid with broad specificity.. Functionally, vacuolar carboxypeptidase involved in degradation of small peptides. Digests preferentially peptides containing an aliphatic or hydrophobic residue in P1' position, as well as methionine, leucine or phenylalanine in P1 position of ester substrate. The chain is Carboxypeptidase Y homolog A (cpyA) from Neurospora crassa (strain ATCC 24698 / 74-OR23-1A / CBS 708.71 / DSM 1257 / FGSC 987).